Consider the following 81-residue polypeptide: MGLRSLGIASSTQMYLAPNWDLVGHPFDCTLNRRLLPPVPNFWGQTTGWLSWQATLLQQFPWVGPRSNSLGSNCVFLAIFR.

This is an uncharacterized protein from Saccharomyces cerevisiae (strain ATCC 204508 / S288c) (Baker's yeast).